The sequence spans 198 residues: FMN-dependent NADH:quinone oxidoreductase (198 aa).

Residues Ser-10, 16 to 18 (SQS), 94 to 97 (MYNF), and 138 to 141 (TRGG) each bind FMN.

This sequence belongs to the azoreductase type 1 family. Homodimer. FMN serves as cofactor.

It carries out the reaction 2 a quinone + NADH + H(+) = 2 a 1,4-benzosemiquinone + NAD(+). It catalyses the reaction N,N-dimethyl-1,4-phenylenediamine + anthranilate + 2 NAD(+) = 2-(4-dimethylaminophenyl)diazenylbenzoate + 2 NADH + 2 H(+). In terms of biological role, quinone reductase that provides resistance to thiol-specific stress caused by electrophilic quinones. Functionally, also exhibits azoreductase activity. Catalyzes the reductive cleavage of the azo bond in aromatic azo compounds to the corresponding amines. The chain is FMN-dependent NADH:quinone oxidoreductase from Shewanella baltica (strain OS223).